Reading from the N-terminus, the 329-residue chain is Beta-ketoacyl-[acyl-carrier-protein] synthase III (329 aa).

Residues Cys-113 and His-255 contribute to the active site. The tract at residues 256–260 is ACP-binding; it reads QANQR. Residue Asn-285 is part of the active site.

The protein belongs to the thiolase-like superfamily. FabH family. In terms of assembly, homodimer.

It localises to the cytoplasm. It catalyses the reaction malonyl-[ACP] + acetyl-CoA + H(+) = 3-oxobutanoyl-[ACP] + CO2 + CoA. It functions in the pathway lipid metabolism; fatty acid biosynthesis. Functionally, catalyzes the condensation reaction of fatty acid synthesis by the addition to an acyl acceptor of two carbons from malonyl-ACP. Catalyzes the first condensation reaction which initiates fatty acid synthesis and may therefore play a role in governing the total rate of fatty acid production. Possesses both acetoacetyl-ACP synthase and acetyl transacylase activities. Its substrate specificity determines the biosynthesis of branched-chain and/or straight-chain of fatty acids. The chain is Beta-ketoacyl-[acyl-carrier-protein] synthase III from Chlorobium phaeovibrioides (strain DSM 265 / 1930) (Prosthecochloris vibrioformis (strain DSM 265)).